The chain runs to 291 residues: Protease HtpX homolog (291 aa).

A run of 2 helical transmembrane segments spans residues 4–24 (IALF…TASL) and 38–58 (LGAL…ISLL). His-144 lines the Zn(2+) pocket. Glu-145 is a catalytic residue. His-148 contributes to the Zn(2+) binding site. A run of 2 helical transmembrane segments spans residues 159 to 179 (LIQG…GYFI) and 197 to 217 (VTTV…VAWF). Residue Glu-222 participates in Zn(2+) binding.

The protein belongs to the peptidase M48B family. The cofactor is Zn(2+).

It is found in the cell inner membrane. The chain is Protease HtpX homolog from Leptothrix cholodnii (strain ATCC 51168 / LMG 8142 / SP-6) (Leptothrix discophora (strain SP-6)).